The sequence spans 325 residues: Phenylalanine--tRNA ligase alpha subunit (325 aa).

Glu251 is a Mg(2+) binding site.

The protein belongs to the class-II aminoacyl-tRNA synthetase family. Phe-tRNA synthetase alpha subunit type 1 subfamily. As to quaternary structure, tetramer of two alpha and two beta subunits. It depends on Mg(2+) as a cofactor.

It is found in the cytoplasm. It carries out the reaction tRNA(Phe) + L-phenylalanine + ATP = L-phenylalanyl-tRNA(Phe) + AMP + diphosphate + H(+). In Thermotoga petrophila (strain ATCC BAA-488 / DSM 13995 / JCM 10881 / RKU-1), this protein is Phenylalanine--tRNA ligase alpha subunit.